The primary structure comprises 334 residues: Dihydroorotate dehydrogenase (quinone) (334 aa).

FMN is bound by residues 61-65 (AGLDK) and threonine 85. Lysine 65 contacts substrate. 110-114 (NRMGF) contacts substrate. FMN contacts are provided by asparagine 138 and asparagine 171. Asparagine 171 lines the substrate pocket. The active-site Nucleophile is serine 174. Asparagine 176 serves as a coordination point for substrate. 2 residues coordinate FMN: lysine 216 and threonine 244. Position 245–246 (245–246 (NT)) interacts with substrate. FMN is bound by residues glycine 266, glycine 295, and 316–317 (YT).

The protein belongs to the dihydroorotate dehydrogenase family. Type 2 subfamily. In terms of assembly, monomer. Requires FMN as cofactor.

It is found in the cell membrane. It carries out the reaction (S)-dihydroorotate + a quinone = orotate + a quinol. It functions in the pathway pyrimidine metabolism; UMP biosynthesis via de novo pathway; orotate from (S)-dihydroorotate (quinone route): step 1/1. Functionally, catalyzes the conversion of dihydroorotate to orotate with quinone as electron acceptor. The chain is Dihydroorotate dehydrogenase (quinone) from Idiomarina loihiensis (strain ATCC BAA-735 / DSM 15497 / L2-TR).